A 180-amino-acid chain; its full sequence is Cytochrome b6-f complex iron-sulfur subunit (180 aa).

Residues 21–43 (LLTFGTITGTALGALYPVVKYFI) traverse the membrane as a helical segment. The 97-residue stretch at 66 to 162 (VSEYLAKHLP…ATVTEDDKLV (97 aa)) folds into the Rieske domain. The [2Fe-2S] cluster site is built by cysteine 108, histidine 110, cysteine 126, and histidine 129. A disulfide bridge links cysteine 113 with cysteine 128.

This sequence belongs to the Rieske iron-sulfur protein family. As to quaternary structure, the 4 large subunits of the cytochrome b6-f complex are cytochrome b6, subunit IV (17 kDa polypeptide, PetD), cytochrome f and the Rieske protein, while the 4 small subunits are PetG, PetL, PetM and PetN. The complex functions as a dimer. [2Fe-2S] cluster is required as a cofactor.

The protein localises to the cellular thylakoid membrane. It catalyses the reaction 2 oxidized [plastocyanin] + a plastoquinol + 2 H(+)(in) = 2 reduced [plastocyanin] + a plastoquinone + 4 H(+)(out). Component of the cytochrome b6-f complex, which mediates electron transfer between photosystem II (PSII) and photosystem I (PSI), cyclic electron flow around PSI, and state transitions. The chain is Cytochrome b6-f complex iron-sulfur subunit from Thermosynechococcus vestitus (strain NIES-2133 / IAM M-273 / BP-1).